A 439-amino-acid chain; its full sequence is Tubulin beta chain (439 aa).

GTP is bound by residues Gln-11, Glu-69, Ser-138, Gly-142, Thr-143, Gly-144, Asn-204, and Asn-226. Glu-69 lines the Mg(2+) pocket.

It belongs to the tubulin family. As to quaternary structure, dimer of alpha and beta chains. A typical microtubule is a hollow water-filled tube with an outer diameter of 25 nm and an inner diameter of 15 nM. Alpha-beta heterodimers associate head-to-tail to form protofilaments running lengthwise along the microtubule wall with the beta-tubulin subunit facing the microtubule plus end conferring a structural polarity. Microtubules usually have 13 protofilaments but different protofilament numbers can be found in some organisms and specialized cells. Mg(2+) serves as cofactor.

It localises to the cytoplasm. The protein resides in the cytoskeleton. Tubulin is the major constituent of microtubules, a cylinder consisting of laterally associated linear protofilaments composed of alpha- and beta-tubulin heterodimers. Microtubules grow by the addition of GTP-tubulin dimers to the microtubule end, where a stabilizing cap forms. Below the cap, tubulin dimers are in GDP-bound state, owing to GTPase activity of alpha-tubulin. This Encephalitozoon cuniculi (strain GB-M1) (Microsporidian parasite) protein is Tubulin beta chain (TUB2).